The chain runs to 257 residues: Type III pantothenate kinase (257 aa).

6–13 (DVGNTSTK) serves as a coordination point for ATP. Residue 109 to 112 (GADR) coordinates substrate. Residue D111 is the Proton acceptor of the active site. Residue D132 coordinates K(+). T135 contacts ATP. Residue T187 participates in substrate binding.

This sequence belongs to the type III pantothenate kinase family. As to quaternary structure, homodimer. NH4(+) serves as cofactor. It depends on K(+) as a cofactor.

The protein resides in the cytoplasm. It carries out the reaction (R)-pantothenate + ATP = (R)-4'-phosphopantothenate + ADP + H(+). It participates in cofactor biosynthesis; coenzyme A biosynthesis; CoA from (R)-pantothenate: step 1/5. Its function is as follows. Catalyzes the phosphorylation of pantothenate (Pan), the first step in CoA biosynthesis. This chain is Type III pantothenate kinase, found in Anaplasma marginale (strain St. Maries).